Consider the following 233-residue polypeptide: Hydroxyacylglutathione hydrolase (233 aa).

Zn(2+)-binding residues include His-52, His-54, Asp-56, His-57, His-108, Asp-125, and His-163.

Belongs to the metallo-beta-lactamase superfamily. Glyoxalase II family. In terms of assembly, monomer. Zn(2+) serves as cofactor.

The catalysed reaction is an S-(2-hydroxyacyl)glutathione + H2O = a 2-hydroxy carboxylate + glutathione + H(+). Its pathway is secondary metabolite metabolism; methylglyoxal degradation; (R)-lactate from methylglyoxal: step 2/2. Functionally, thiolesterase that catalyzes the hydrolysis of S-D-lactoyl-glutathione to form glutathione and D-lactic acid. The sequence is that of Hydroxyacylglutathione hydrolase from Histophilus somni (strain 2336) (Haemophilus somnus).